We begin with the raw amino-acid sequence, 210 residues long: Cytochrome c oxidase subunit 2 (210 aa).

The Mitochondrial intermembrane portion of the chain corresponds to Met-1 to Leu-20. Residues Ser-21–Ser-42 form a helical membrane-spanning segment. Residues Lys-43 to Asp-60 lie on the Mitochondrial matrix side of the membrane. The chain crosses the membrane as a helical span at residues Val-61 to His-86. At Leu-87–Ile-210 the chain is on the mitochondrial intermembrane side. 6 residues coordinate Cu cation: His-157, Cys-192, Glu-194, Cys-196, His-200, and Met-203. Residue Glu-194 participates in Mg(2+) binding.

This sequence belongs to the cytochrome c oxidase subunit 2 family. In terms of assembly, component of the cytochrome c oxidase (complex IV, CIV), a multisubunit enzyme composed of a catalytic core of 3 subunits and several supernumerary subunits. The complex exists as a monomer or a dimer and forms supercomplexes (SCs) in the inner mitochondrial membrane with ubiquinol-cytochrome c oxidoreductase (cytochrome b-c1 complex, complex III, CIII). It depends on Cu cation as a cofactor.

Its subcellular location is the mitochondrion inner membrane. The catalysed reaction is 4 Fe(II)-[cytochrome c] + O2 + 8 H(+)(in) = 4 Fe(III)-[cytochrome c] + 2 H2O + 4 H(+)(out). Its function is as follows. Component of the cytochrome c oxidase, the last enzyme in the mitochondrial electron transport chain which drives oxidative phosphorylation. The respiratory chain contains 3 multisubunit complexes succinate dehydrogenase (complex II, CII), ubiquinol-cytochrome c oxidoreductase (cytochrome b-c1 complex, complex III, CIII) and cytochrome c oxidase (complex IV, CIV), that cooperate to transfer electrons derived from NADH and succinate to molecular oxygen, creating an electrochemical gradient over the inner membrane that drives transmembrane transport and the ATP synthase. Cytochrome c oxidase is the component of the respiratory chain that catalyzes the reduction of oxygen to water. Electrons originating from reduced cytochrome c in the intermembrane space (IMS) are transferred via the dinuclear copper A center (CU(A)) of subunit 2 and heme A of subunit 1 to the active site in subunit 1, a binuclear center (BNC) formed by heme A3 and copper B (CU(B)). The BNC reduces molecular oxygen to 2 water molecules using 4 electrons from cytochrome c in the IMS and 4 protons from the mitochondrial matrix. The polypeptide is Cytochrome c oxidase subunit 2 (Leishmania tarentolae (Sauroleishmania tarentolae)).